The following is a 155-amino-acid chain: MLHKKYRPNVAAIIMSPDYPNTCEVFIAERIDIEGAWQFPQGGIDEGETPLEALHRELLEEIGTNEIEILAQYPRWIAYDFPSNMEHKFYAFDGQKQRYFLVRLKHANNIDLNKHTPEFRAYQFIHLKDLLKKIVPFKRQVYRQVIAYFKRDGYL.

The 143-residue stretch at 5–147 folds into the Nudix hydrolase domain; the sequence is KYRPNVAAII…KRQVYRQVIA (143 aa). The short motif at 42–63 is the Nudix box element; the sequence is GGIDEGETPLEALHRELLEEIG.

It belongs to the Nudix hydrolase family. RppH subfamily. A divalent metal cation is required as a cofactor.

Accelerates the degradation of transcripts by removing pyrophosphate from the 5'-end of triphosphorylated RNA, leading to a more labile monophosphorylated state that can stimulate subsequent ribonuclease cleavage. In Helicobacter pylori (strain G27), this protein is RNA pyrophosphohydrolase.